We begin with the raw amino-acid sequence, 200 residues long: Holliday junction resolvase RecU (200 aa).

The disordered stretch occupies residues 1-25 (MTIRYPNGKRYNQASQPQKTPIKTH). Residues 10–25 (RYNQASQPQKTPIKTH) are compositionally biased toward polar residues. Mg(2+) is bound by residues threonine 85, aspartate 87, glutamate 100, and glutamine 119.

The protein belongs to the RecU family. It depends on Mg(2+) as a cofactor.

It localises to the cytoplasm. The catalysed reaction is Endonucleolytic cleavage at a junction such as a reciprocal single-stranded crossover between two homologous DNA duplexes (Holliday junction).. Its function is as follows. Endonuclease that resolves Holliday junction intermediates in genetic recombination. Cleaves mobile four-strand junctions by introducing symmetrical nicks in paired strands. Promotes annealing of linear ssDNA with homologous dsDNA. Required for DNA repair, homologous recombination and chromosome segregation. The protein is Holliday junction resolvase RecU of Bacillus cereus (strain G9842).